The sequence spans 273 residues: Nickel import ATP-binding protein NikE (273 aa).

The ABC transporter domain maps to 13–252 (YRTGGLLRKR…AHPVGRQLQA (240 aa)). 45-52 (GSSGSGKS) serves as a coordination point for ATP.

The protein belongs to the ABC transporter superfamily. Nickel importer (TC 3.A.1.5.3) family. The complex is composed of two ATP-binding proteins (NikD and NikE), two transmembrane proteins (NikB and NikC) and a solute-binding protein (NikA).

Its subcellular location is the cell inner membrane. It catalyses the reaction Ni(2+)(out) + ATP + H2O = Ni(2+)(in) + ADP + phosphate + H(+). In terms of biological role, part of the ABC transporter complex NikABCDE involved in nickel import. Responsible for energy coupling to the transport system. This Pseudomonas putida (strain ATCC 47054 / DSM 6125 / CFBP 8728 / NCIMB 11950 / KT2440) protein is Nickel import ATP-binding protein NikE.